We begin with the raw amino-acid sequence, 194 residues long: ATP-dependent Clp protease proteolytic subunit (194 aa).

The active-site Nucleophile is the serine 98. Histidine 123 is an active-site residue.

This sequence belongs to the peptidase S14 family. In terms of assembly, fourteen ClpP subunits assemble into 2 heptameric rings which stack back to back to give a disk-like structure with a central cavity, resembling the structure of eukaryotic proteasomes.

The protein resides in the cytoplasm. It carries out the reaction Hydrolysis of proteins to small peptides in the presence of ATP and magnesium. alpha-casein is the usual test substrate. In the absence of ATP, only oligopeptides shorter than five residues are hydrolyzed (such as succinyl-Leu-Tyr-|-NHMec, and Leu-Tyr-Leu-|-Tyr-Trp, in which cleavage of the -Tyr-|-Leu- and -Tyr-|-Trp bonds also occurs).. Functionally, cleaves peptides in various proteins in a process that requires ATP hydrolysis. Has a chymotrypsin-like activity. Plays a major role in the degradation of misfolded proteins. The protein is ATP-dependent Clp protease proteolytic subunit of Sodalis glossinidius (strain morsitans).